Reading from the N-terminus, the 105-residue chain is uncharacterized protein (105 aa).

This is an uncharacterized protein from Orgyia pseudotsugata multicapsid polyhedrosis virus (OpMNPV).